Reading from the N-terminus, the 354-residue chain is Uroporphyrinogen decarboxylase (354 aa).

Residues 25 to 29 (RQAGR), aspartate 75, tyrosine 152, threonine 207, and histidine 330 each bind substrate.

This sequence belongs to the uroporphyrinogen decarboxylase family. In terms of assembly, homodimer.

The protein resides in the cytoplasm. It carries out the reaction uroporphyrinogen III + 4 H(+) = coproporphyrinogen III + 4 CO2. The protein operates within porphyrin-containing compound metabolism; protoporphyrin-IX biosynthesis; coproporphyrinogen-III from 5-aminolevulinate: step 4/4. Its function is as follows. Catalyzes the decarboxylation of four acetate groups of uroporphyrinogen-III to yield coproporphyrinogen-III. In Xanthomonas euvesicatoria pv. vesicatoria (strain 85-10) (Xanthomonas campestris pv. vesicatoria), this protein is Uroporphyrinogen decarboxylase.